We begin with the raw amino-acid sequence, 378 residues long: Zinc transporter 7 (378 aa).

Over 1–37 (MLPLSIKDDEYKPPRLNLFRKMSGWFRSILADKTSRN) the chain is Cytoplasmic. The helical transmembrane segment at 38 to 58 (LFFFLCLNLSFAFVELLYGVW) threads the bilayer. At 59–67 (SNSLGLISD) the chain is on the lumenal side. A helical membrane pass occupies residues 68–88 (SFHMFFDCTALLAGLAASVIS). At 89-102 (KWRSNDAFSYGYVR) the chain is on the cytoplasmic side. Residues 103–123 (AEVLAGFVNGLFLIFTAFFIF) form a helical membrane-spanning segment. The Lumenal portion of the chain corresponds to 124–140 (SEGVERALEPPDVHHER). Residues 141–161 (LLPVSILGFIVNLIGIFVFQH) traverse the membrane as a helical segment. The segment at 161 to 223 (HGGHGHSHGS…HGQDYCHDDH (63 aa)) is his-rich loop. Residues 162–238 (GGHGHSHGSG…TGSSKQILQG (77 aa)) are Cytoplasmic-facing. The segment at 185-214 (HGHSHRGHGHSHEHKHGHTHDHGHSHGLSH) is disordered. Residues 186–211 (GHSHRGHGHSHEHKHGHTHDHGHSHG) are compositionally biased toward basic residues. A helical membrane pass occupies residues 239–259 (VFLHIVADTLGSIGVIISAIL). At 260-264 (MQNYG) the chain is on the lumenal side. A helical transmembrane segment spans residues 265 to 285 (LMIADPICSMLIALLIGVSIV). The Cytoplasmic segment spans residues 286–378 (PLLKESIGIL…LYIQIDVAAM (93 aa)).

This sequence belongs to the cation diffusion facilitator (CDF) transporter (TC 2.A.4) family. SLC30A subfamily. As to quaternary structure, homooligomer.

The protein localises to the golgi apparatus membrane. It localises to the cytoplasmic vesicle. The protein resides in the golgi apparatus. It is found in the trans-Golgi network. Its subcellular location is the sarcoplasmic reticulum. The protein localises to the mitochondrion. The catalysed reaction is Zn(2+)(in) = Zn(2+)(out). Zinc ion transporter mediating zinc entry from the cytosol into the lumen of organelles along the secretory pathway. By contributing to zinc ion homeostasis within the early secretory pathway, regulates the activation and folding of enzymes like alkaline phosphatases. The protein is Zinc transporter 7 (SLC30A7) of Gallus gallus (Chicken).